The chain runs to 497 residues: MDEDLVVALRLQEEWDVQMARRAAAAREPVSLVDASWELVDPTPDLQALFLQFNDRFFWGQLEAVEVKWSVRMTLCAGICTYEGRGGMCSIRLSEPLLKLRPRKDLVETLLHEMIHAYLFVTNNDKDREGHGPEFCKHMHRINQLTGANITVYHTFHDEVDEYRRHWWRCNGPCQHRQPYYGYVKRATNRAPSVHDYWWADHQKTCGGTYIKIKEPENYSKKGRGKTKADKQPASAVENKDKLCRGEAQLLIPFSGKGYVLGDASTCPSAGKLNTSYMVNEAKGLSSQDHSVSGLRLNSNAEVKCEQNCLPKKPHLVSPLPTASHQSVLSSYFPRVSVANQKAFRNVNGSPVKNGTTGDGTKRPASGGSQRKVPPSRASLRNTSKVTAPASATVTSAAGTSATISREESGSEDQFLNKRPRLEDRTALDTIKEQTQSGGDLRSSSQPTAASAPQSLSSQRRLVNCPVCQGVVVESQINEHLDRCLEGNKTNLRPRRV.

Methionine 1 bears the N-acetylmethionine mark. Residues 46–213 form the SprT-like domain; that stretch reads LQALFLQFND…KTCGGTYIKI (168 aa). Histidine 112 is a Zn(2+) binding site. Glutamate 113 is an active-site residue. Zn(2+) is bound by residues histidine 116 and histidine 131. Lysine 231 carries the N6-acetyllysine modification. Residues 254-262 carry the SHP-box motif; that stretch reads FSGKGYVLG. Phosphoserine is present on serine 269. Residue lysine 304 forms a Glycyl lysine isopeptide (Lys-Gly) (interchain with G-Cter in SUMO2) linkage. A PIP-box motif is present at residues 326-333; that stretch reads QSVLSSYF. Residue lysine 342 forms a Glycyl lysine isopeptide (Lys-Gly) (interchain with G-Cter in SUMO2); alternate linkage. Lysine 342 is covalently cross-linked (Glycyl lysine isopeptide (Lys-Gly) (interchain with G-Cter in ubiquitin); alternate). Residues 344-459 form a disordered region; it reads FRNVNGSPVK…ASAPQSLSSQ (116 aa). Over residues 347–356 the composition is skewed to polar residues; sequence VNGSPVKNGT. Lysine 362 is covalently cross-linked (Glycyl lysine isopeptide (Lys-Gly) (interchain with G-Cter in SUMO2)). Low complexity predominate over residues 383-404; that stretch reads TSKVTAPASATVTSAAGTSATI. Residue serine 384 is modified to Phosphoserine. A Nuclear localization signal motif is present at residues 413-424; sequence DQFLNKRPRLED. Basic and acidic residues predominate over residues 420–432; that stretch reads PRLEDRTALDTIK. Residue lysine 432 forms a Glycyl lysine isopeptide (Lys-Gly) (interchain with G-Cter in SUMO2) linkage. Residues 442–459 show a composition bias toward low complexity; sequence RSSSQPTAASAPQSLSSQ. The segment at 462-489 adopts a UBZ4-type zinc-finger fold; the sequence is LVNCPVCQGVVVESQINEHLDRCLEGNK. Zn(2+) contacts are provided by cysteine 465, cysteine 468, histidine 480, and cysteine 484.

It belongs to the Spartan family. In terms of assembly, homodimer. Interacts (VIA PIP-box) with PCNA (when ubiquitinated). Interacts (via its SHP-box) with VCP/p97. Interacts with RAD18. Interacts with KCTD13 and POLD3. Zn(2+) serves as cofactor. Post-translationally, autocatalytically cleaved in response to double-stranded DNA-binding: autocatalytic cleavage takes place in trans and leads to inactivation. Monoubiquitinated; monoubiquitination promotes exclusion from chromatin. Deubiquitinated by VCPIP1: deubiquitination is required for subsequent acetylation and recruitment to chromatin and DNA damage sites. In terms of processing, acetylated following deubiquitination by VCPIP1, leading to recruitment to chromatin and DNA damage sites. Post-translationally, phosphorylation by CHEK1 promotes recruitment to chromatin.

The protein localises to the nucleus. It is found in the chromosome. DNA-binding activates the protease activity: single-stranded DNA-binding specifically activates ability to cleave covalent DNA-protein cross-links (DPCs). In contrast, double-stranded DNA-binding specifically activates autocatalytic cleavage, and subsequent inactivation. In terms of biological role, DNA-dependent metalloendopeptidase that mediates the proteolytic cleavage of covalent DNA-protein cross-links (DPCs) during DNA synthesis, thereby playing a key role in maintaining genomic integrity. DPCs are highly toxic DNA lesions that interfere with essential chromatin transactions, such as replication and transcription, and which are induced by reactive agents, such as UV light or formaldehyde. Associates with the DNA replication machinery and specifically removes DPCs during DNA synthesis. Catalyzes proteolytic cleavage of the HMCES DNA-protein cross-link following unfolding by the BRIP1/FANCJ helicase. Acts as a pleiotropic protease for DNA-binding proteins cross-linked with DNA, such as TOP1, TOP2A, histones H3 and H4. Mediates degradation of DPCs that are not ubiquitinated, while it is not able to degrade ubiquitinated DPCs. SPRTN activation requires polymerase collision with DPCs followed by helicase bypass of DPCs. Involved in recruitment of VCP/p97 to sites of DNA damage. Also acts as an activator of CHEK1 during normal DNA replication by mediating proteolytic cleavage of CHEK1, thereby promoting CHEK1 removal from chromatin and subsequent activation. Does not activate CHEK1 in response to DNA damage. May also act as a 'reader' of ubiquitinated PCNA: recruited to sites of UV damage and interacts with ubiquitinated PCNA and RAD18, the E3 ubiquitin ligase that monoubiquitinates PCNA. Facilitates chromatin association of RAD18 and is required for efficient PCNA monoubiquitination, promoting a feed-forward loop to enhance PCNA ubiquitination and translesion DNA synthesis. This Mus musculus (Mouse) protein is DNA-dependent metalloprotease SPRTN.